A 500-amino-acid polypeptide reads, in one-letter code: Glucose-1-phosphate adenylyltransferase small subunit 1, chloroplastic/amyloplastic (500 aa).

A chloroplast-targeting transit peptide spans 1 to 50; sequence MAMMAMGAASWAPIPAPARAAAAFYPGRDLAAARRRRGAAARRPFVFTPR.

Belongs to the bacterial/plant glucose-1-phosphate adenylyltransferase family. Heterotetramer composed of two small and two large subunits. Expressed in leaves.

The protein localises to the plastid. Its subcellular location is the chloroplast. It localises to the amyloplast. It carries out the reaction alpha-D-glucose 1-phosphate + ATP + H(+) = ADP-alpha-D-glucose + diphosphate. It participates in glycan biosynthesis; starch biosynthesis. With respect to regulation, activated by 3'phosphoglycerate, inhibited by orthophosphate. Allosteric regulation. Involved in synthesis of starch. Catalyzes the synthesis of ADP-glucose, a molecule that serves as an activated glycosyl donor for alpha-1,4-glucan synthesis. Essential for starch synthesis in leaf chloroplasts and endosperm amyloplasts. The sequence is that of Glucose-1-phosphate adenylyltransferase small subunit 1, chloroplastic/amyloplastic from Oryza sativa subsp. japonica (Rice).